We begin with the raw amino-acid sequence, 384 residues long: Surfeit locus protein 1-like (384 aa).

3 helical membrane passes run 55 to 75, 302 to 322, and 338 to 358; these read ALLW…YKFL, IPLD…TCFI, and IGVE…TKIY.

This sequence belongs to the SURF1 (TC 3.D.4.8) family.

Its subcellular location is the mitochondrion inner membrane. Its function is as follows. May be involved in the biogenesis of the COX complex. The sequence is that of Surfeit locus protein 1-like from Arabidopsis thaliana (Mouse-ear cress).